Here is a 150-residue protein sequence, read N- to C-terminus: C-type natriuretic peptide (150 aa).

A signal peptide spans 1-31 (MSISSSSSSSSSSSSCLLLISLMLLAASCQG). Positions 32–127 (RPDLQHRNHK…RKMFRGRTKK (96 aa)) are excised as a propeptide. Over residues 60 to 73 (GAADGSSGEEAALS) the composition is skewed to low complexity. The disordered stretch occupies residues 60–109 (GAADGSSGEEAALSQRAPPSIRALHPRSGRLGLRDDLEAEPPAENKPRRR). Cysteines 134 and 150 form a disulfide.

The protein belongs to the natriuretic peptide family. In terms of tissue distribution, expressed in brain, but not in atrium or ventricle.

It localises to the secreted. Hormone which plays a role in endochondral ossification through regulation of cartilaginous growth plate chondrocytes proliferation and differentiation. May also be vasoactive and natriuretic. The polypeptide is C-type natriuretic peptide (cnp) (Acipenser transmontanus (White sturgeon)).